The following is a 185-amino-acid chain: Inner membrane lipoprotein DcrB (185 aa).

A signal peptide spans 1-19; it reads MRNLVKYVGIGLLVMGLAA. The N-palmitoyl cysteine moiety is linked to residue C20. Residue C20 is the site of S-diacylglycerol cysteine attachment.

The protein belongs to the DcrB family.

The protein resides in the cell membrane. Functionally, plays a role in cell envelope biogenesis, maintenance of cell envelope integrity and membrane homeostasis. Essential for lipoprotein maturation under conditions where membrane fluidity may be altered. In Shigella flexneri, this protein is Inner membrane lipoprotein DcrB.